The sequence spans 4115 residues: Transcription-associated protein 1 (4115 aa).

Polar residues predominate over residues 1-11; the sequence is MDPSIPSTSHR. Disordered stretches follow at residues 1-21 and 543-563; these read MDPS…GVQP and ESEQ…KKTS. Residues 544 to 563 are compositionally biased toward basic and acidic residues; sequence SEQKRNELPTPTKEHTKKTS. 2 TPR repeats span residues 1341–1374 and 1820–1853; these read LDGL…LLDL and QDYD…EVIP. The segment at 2678-2701 is disordered; sequence LEEPEPMEVDQPKNAPAEEPKDNK. Residues 2808–3421 enclose the FAT domain; that stretch reads LIEFISSKHE…SNGASKVSKS (614 aa). Residues 2855-2888 form a TPR 3 repeat; sequence IETLESLGALYKELAEFDQYSAIWERRSVFPETM. Residues 3740–4100 enclose the PI3K/PI4K catalytic domain; it reads EPYFEIVMRG…CNSLIIRAKD (361 aa). The interval 3746–3752 is G-loop; that stretch reads VMRGGQV. The interval 3959 to 3967 is catalytic loop; the sequence is NLSPMTPHQ. Residues 3979–4006 are activation loop; the sequence is NPFYRFELGTGQLMDIEHFAHEVPFRLT. The FATC domain maps to 4083–4115; sequence DAKVKKDDCNSLIIRAKDSDNLSRMPPTYHAWF.

The protein belongs to the PI3/PI4-kinase family. TRA1 subfamily.

It is found in the nucleus. Functionally, influences germ cell fate in hermaphrodites. Acts downstream of tra-2 and tra-3 and through the Tip60 histone acetyltransferase complex to regulate germ cell fate decisions. Required for spermatogenesis and embryonic development. Acts with tra-2 to promote expression of fog-3 and control male tail development. Involved in the negative regulation of vulval development. The polypeptide is Transcription-associated protein 1 (Caenorhabditis briggsae).